The following is a 230-amino-acid chain: Ribosomal RNA large subunit methyltransferase E (230 aa).

Residues glycine 82, tryptophan 84, aspartate 100, aspartate 116, and aspartate 140 each contribute to the S-adenosyl-L-methionine site. Lysine 180 serves as the catalytic Proton acceptor.

It belongs to the class I-like SAM-binding methyltransferase superfamily. RNA methyltransferase RlmE family.

It is found in the cytoplasm. It catalyses the reaction uridine(2552) in 23S rRNA + S-adenosyl-L-methionine = 2'-O-methyluridine(2552) in 23S rRNA + S-adenosyl-L-homocysteine + H(+). Specifically methylates the uridine in position 2552 of 23S rRNA at the 2'-O position of the ribose in the fully assembled 50S ribosomal subunit. This chain is Ribosomal RNA large subunit methyltransferase E, found in Granulibacter bethesdensis (strain ATCC BAA-1260 / CGDNIH1).